The primary structure comprises 1939 residues: Myosin heavy chain, skeletal muscle, adult (1939 aa).

Ala-2 bears the N-acetylalanine mark. A Myosin N-terminal SH3-like domain is found at 34–83 (DAKSSVFVVHPKESFVKGTIQSKEGGKVTVKTEGGETLTVKEDQVFSMNP). Lys-36 carries the post-translational modification N6-methyllysine. The 695-residue stretch at 87-781 (DKIEDMAMMT…LLGLLEEMRD (695 aa)) folds into the Myosin motor domain. Lys-131 is modified (N6,N6,N6-trimethyllysine). 180–187 (GESGAGKT) serves as a coordination point for ATP. Position 552 is an N6,N6,N6-trimethyllysine (Lys-552). Positions 658 to 680 (LNKLMANLRSTHPHFVRCIIPNE) are actin-binding. His-756 bears the Pros-methylhistidine mark. The tract at residues 760 to 774 (RFGHTKVFFKAGLLG) is actin-binding. Residues 784-813 (LAEIITRTQARCRGFLMRVEYRRMVERRES) enclose the IQ domain. Residues 839–841 (IKP) are hinge. Residues 842 to 1939 (LLKSAESEKE…IHGKKIEEEE (1098 aa)) adopt a coiled-coil conformation.

It belongs to the TRAFAC class myosin-kinesin ATPase superfamily. Myosin family. In terms of assembly, muscle myosin is a hexameric protein that consists of 2 heavy chain subunits (MHC), 2 alkali light chain subunits (MLC) and 2 regulatory light chain subunits (MLC-2).

Its subcellular location is the cytoplasm. It localises to the myofibril. Functionally, muscle contraction. Myosin is a protein that binds to F-actin and has ATPase activity that is activated by F-actin. The chain is Myosin heavy chain, skeletal muscle, adult from Gallus gallus (Chicken).